Reading from the N-terminus, the 259-residue chain is LOB domain-containing protein CRL1 (259 aa).

The LOB domain maps to 6–108 (SPCGACKFLR…AQLASLKAAA (103 aa)).

Belongs to the LOB domain-containing protein family. In terms of assembly, can form homodimers. In terms of tissue distribution, expressed in unelongating basal internodes, at the base of shoot in parenchyma cells adjacent to the peripheral vascular cylinder of the stem, and root pericycle cells. Expressed in lateral and adventitious root primordia, tiller primordia, vascular tissues, scutellum, and young pedicels.

It localises to the nucleus. Functionally, acts as a positive regulator of adventitious (crown) root formation by promoting its initiation. Acts as a positive regulator of lateral root formation. Regulated by the auxin response factor and transcriptional activator ARF23/ARF1. Involved in auxin-mediated cell dedifferentiation, and may promote the initial cell division in the pericycle cells adjacent to the peripheral vascular cylinder at the base of the stem. May act upstream of the gene regulatory network controlling adventitious root (crown) development. This is LOB domain-containing protein CRL1 from Oryza sativa subsp. japonica (Rice).